The following is a 369-amino-acid chain: ERCC4 domain-containing protein EP364R (369 aa).

The region spanning 3–101 (FLVADHREHH…QLYFFVEGPA (99 aa)) is the ERCC4 domain. The disordered stretch occupies residues 339–369 (PLHDVSDDASSDASSPTGHQTLSKEMSLNTA). A compositionally biased stretch (polar residues) spans 354–369 (PTGHQTLSKEMSLNTA).

Belongs to the asfivirus EP364R family.

Its function is as follows. Plays a role in the inhibition of type I interferon signaling pathway. Mechanistically, specifically interacts with 2',3'-cGAMP and cleaves it via its phosphodiesterase activity. In turn, prevents 2',3'-cGAMP interaction with host ER-resident STING1 leading to inhibition of downstream signaling pathway and type I interferon production. The protein is ERCC4 domain-containing protein EP364R of African swine fever virus (isolate Tick/South Africa/Pretoriuskop Pr4/1996) (ASFV).